The chain runs to 295 residues: GATA transcription factor 18 (295 aa).

The GATA-type zinc-finger motif lies at 148-202; that stretch reads SLLARRCANCDTTSTPLWRNGPRGPKSLCNACGIRFKKEERRTTAATGNTVVGAA.

It belongs to the type IV zinc-finger family. Class B subfamily. As to quaternary structure, homodimer. Forms heterodimers with GATA19, GATA22 and GATA21. Interacts with JAG. Binds to AGO10/PNH. As to expression, expressed in vegetative and inflorescence shoot apical meristems (SAMs), axillary (SAMs), floral meristems, developing ovules and stamens, vascular tissues, and in the embryo.

The protein localises to the nucleus. Its function is as follows. Transcriptional factor that specifically binds 5'-GATA-3' or 5'-GAT-3' motifs within gene promoters (including its own promoter and GATA21 promoter), thus regulating the expression of genes mostly involved in hormone responses and floral organ specification (including genes regulating hormones responses). Regulates both flower and shoot apical meristem (SAM) development, especially for establishing organ boundaries in shoots and flowers, probably by controlling the number and position of WUS-expressing cells. Coregulates, with AGO10/PNH, the shoot apical meristem (SAM) organization. Regulates floral organ development via the promotion of JAG and NPR5/BOP2 expression. Modulates cytokinin homeostasis in organ boundaries by regulating CKX3 expression. Involved in cell proliferation and differentiation. Required to position the inductive proembryo boundary via the regulation of gene expression and for early embryonic development. Together with GIF1/AN3, mediates cotyledon identity by preventing ectopic root formation through the repression of PLT1 expression. The chain is GATA transcription factor 18 from Arabidopsis thaliana (Mouse-ear cress).